Here is a 139-residue protein sequence, read N- to C-terminus: Histone H2B (139 aa).

The span at 1 to 10 (MAPKVAEKKP) shows a compositional bias: basic and acidic residues. Residues 1-47 (MAPKVAEKKPSLAGKAPAGKAPAEKKEAGKKTTTATGEKKKRTKARK) are disordered. N6-acetyllysine; alternate is present on residues K8 and K9. Residues K8 and K9 each participate in a glycyl lysine isopeptide (Lys-Gly) (interchain with G-Cter in SUMO); alternate cross-link. K15 carries the N6-acetyllysine modification. K25 is modified (N6-acetyllysine; alternate). A Glycyl lysine isopeptide (Lys-Gly) (interchain with G-Cter in SUMO); alternate cross-link involves residue K25. A Glycyl lysine isopeptide (Lys-Gly) (interchain with G-Cter in SUMO) cross-link involves residue K26. Residue K133 forms a Glycyl lysine isopeptide (Lys-Gly) (interchain with G-Cter in ubiquitin) linkage.

This sequence belongs to the histone H2B family. The nucleosome is a histone octamer containing two molecules each of H2A, H2B, H3 and H4 assembled in one H3-H4 heterotetramer and two H2A-H2B heterodimers. The octamer wraps approximately 147 bp of DNA. Monoubiquitinated by the UBC2-BRE1 complex to form H2BK123ub1. H2BK123ub1 gives a specific tag for epigenetic transcriptional activation and is also prerequisite for H3K4me and H3K79me formation. H2BK123ub1 also modulates the formation of double-strand breaks during meiosis and is a prerequisite for DNA-damage checkpoint activation. In terms of processing, acetylated by GCN5 to form H2BK11ac and H2BK16ac. H2BK16ac can also be formed by ESA1. Acetylation of N-terminal lysines and particularly formation of H2BK11acK16ac has a positive effect on transcription. Post-translationally, sumoylation to form H2BK6su or H2BK7su, and probably also H2BK16su or H2BK17su, occurs preferentially near the telomeres and represses gene transcription.

The protein localises to the nucleus. The protein resides in the chromosome. Its function is as follows. Core component of nucleosome. Nucleosomes wrap and compact DNA into chromatin, limiting DNA accessibility to the cellular machineries which require DNA as a template. Histones thereby play a central role in transcription regulation, DNA repair, DNA replication and chromosomal stability. DNA accessibility is regulated via a complex set of post-translational modifications of histones, also called histone code, and nucleosome remodeling. This is Histone H2B (HTB1) from Yarrowia lipolytica (strain CLIB 122 / E 150) (Yeast).